Consider the following 700-residue polypeptide: Phosphoribosylformylglycinamidine synthase subunit PurL (700 aa).

His34 is a catalytic residue. Position 37 (Tyr37) interacts with ATP. Glu79 serves as a coordination point for Mg(2+). Substrate contacts are provided by residues 80–83 and Arg102; that span reads SHNH. The Proton acceptor role is filled by His81. Asp103 contributes to the Mg(2+) binding site. Gln227 contacts substrate. Asp255 contacts Mg(2+). 299–301 contributes to the substrate binding site; that stretch reads ESQ. Residues Asp476 and Gly513 each coordinate ATP. Asn514 is a Mg(2+) binding site. A substrate-binding site is contributed by Ser516.

This sequence belongs to the FGAMS family. Monomer. Part of the FGAM synthase complex composed of 1 PurL, 1 PurQ and 2 PurS subunits.

The protein resides in the cytoplasm. The catalysed reaction is N(2)-formyl-N(1)-(5-phospho-beta-D-ribosyl)glycinamide + L-glutamine + ATP + H2O = 2-formamido-N(1)-(5-O-phospho-beta-D-ribosyl)acetamidine + L-glutamate + ADP + phosphate + H(+). Its pathway is purine metabolism; IMP biosynthesis via de novo pathway; 5-amino-1-(5-phospho-D-ribosyl)imidazole from N(2)-formyl-N(1)-(5-phospho-D-ribosyl)glycinamide: step 1/2. Functionally, part of the phosphoribosylformylglycinamidine synthase complex involved in the purines biosynthetic pathway. Catalyzes the ATP-dependent conversion of formylglycinamide ribonucleotide (FGAR) and glutamine to yield formylglycinamidine ribonucleotide (FGAM) and glutamate. The FGAM synthase complex is composed of three subunits. PurQ produces an ammonia molecule by converting glutamine to glutamate. PurL transfers the ammonia molecule to FGAR to form FGAM in an ATP-dependent manner. PurS interacts with PurQ and PurL and is thought to assist in the transfer of the ammonia molecule from PurQ to PurL. The protein is Phosphoribosylformylglycinamidine synthase subunit PurL of Halobacterium salinarum (strain ATCC 29341 / DSM 671 / R1).